The chain runs to 128 residues: Protein Wnt-10 (128 aa).

5 cysteine pairs are disulfide-bonded: Cys-3/Cys-17, Cys-5/Cys-12, Cys-74/Cys-105, Cys-90/Cys-100, and Cys-127/Cys-128. A lipid anchor (O-palmitoleoyl serine; by PORCN) is attached at Ser-9. N-linked (GlcNAc...) asparagine glycosylation occurs at Asn-91.

This sequence belongs to the Wnt family. Post-translationally, palmitoleoylation is required for efficient binding to frizzled receptors. Depalmitoleoylation leads to Wnt signaling pathway inhibition. As to expression, in embryo, in dorsal hindbrain; in adults, in brain.

It is found in the secreted. The protein resides in the extracellular space. It localises to the extracellular matrix. In terms of biological role, ligand for members of the frizzled family of seven transmembrane receptors. Probable developmental protein. May be a signaling molecule which affects the development of discrete regions of tissues. Is likely to signal over only few cell diameters. The polypeptide is Protein Wnt-10 (wnt10) (Xenopus laevis (African clawed frog)).